Reading from the N-terminus, the 300-residue chain is Interferon-stimulated gene 20 kDa protein (300 aa).

Residues Asp11, Glu13, Asp90, and His93 each coordinate Mn(2+).

The protein belongs to the exonuclease superfamily. Associates with PML and SP100 in the PML NB complex. Associates with survival motor neuron protein (SMN)-containing macromolecular nuclear complexes and U1 and U2 snRNAs and U3 snoRNA. The cofactor is Mn(2+).

The protein localises to the nucleus. The protein resides in the nucleolus. It is found in the cytoplasm. It localises to the cajal body. Its subcellular location is the P-body. The catalysed reaction is Exonucleolytic cleavage in the 3'- to 5'-direction to yield nucleoside 5'-phosphates.. Interferon-induced antiviral exoribonuclease that acts mainly on single-stranded RNA. Inhibition of several viruses does not involve the degradation of viral RNAs, but rather the inhibition of translation of viral proteins. Exerts a translational control over a large panel of non-self RNA substrates while sparing endogenous transcripts. This activity correlates with the protein's ability to localize in cytoplasmic processing bodies. May also act as master regulator of over hundred interferon stimulated genes leading to viral genome translation inhibition. May play additional roles in the maturation of snRNAs and rRNAs, and in ribosome biogenesis. This Mus musculus (Mouse) protein is Interferon-stimulated gene 20 kDa protein (Isg20).